A 274-amino-acid polypeptide reads, in one-letter code: Octanoyltransferase LipM (274 aa).

In terms of domain architecture, BPL/LPL catalytic spans 32–244 (GEVPPTLRFY…GFARALGLTL (213 aa)). C146 (acyl-thioester intermediate) is an active-site residue.

It belongs to the octanoyltransferase LipM family. As to quaternary structure, monomer.

The catalysed reaction is octanoyl-[ACP] + L-lysyl-[protein] = N(6)-octanoyl-L-lysyl-[protein] + holo-[ACP] + H(+). It participates in protein modification; protein lipoylation via endogenous pathway; protein N(6)-(lipoyl)lysine from octanoyl-[acyl-carrier-protein]. Catalyzes the transfer of endogenously produced octanoic acid from octanoyl-acyl-carrier-protein onto the lipoyl domain of GcvH, an intermediate carrier during protein lipoylation. The protein is Octanoyltransferase LipM of Symbiobacterium thermophilum (strain DSM 24528 / JCM 14929 / IAM 14863 / T).